The chain runs to 329 residues: 4-hydroxythreonine-4-phosphate dehydrogenase (329 aa).

His-136 and Thr-137 together coordinate substrate. Residues His-166, His-211, and His-266 each coordinate a divalent metal cation. Substrate contacts are provided by Lys-274, Asn-283, and Arg-292.

It belongs to the PdxA family. In terms of assembly, homodimer. Requires Zn(2+) as cofactor. Mg(2+) serves as cofactor. The cofactor is Co(2+).

The protein localises to the cytoplasm. It catalyses the reaction 4-(phosphooxy)-L-threonine + NAD(+) = 3-amino-2-oxopropyl phosphate + CO2 + NADH. Its pathway is cofactor biosynthesis; pyridoxine 5'-phosphate biosynthesis; pyridoxine 5'-phosphate from D-erythrose 4-phosphate: step 4/5. Functionally, catalyzes the NAD(P)-dependent oxidation of 4-(phosphooxy)-L-threonine (HTP) into 2-amino-3-oxo-4-(phosphooxy)butyric acid which spontaneously decarboxylates to form 3-amino-2-oxopropyl phosphate (AHAP). The sequence is that of 4-hydroxythreonine-4-phosphate dehydrogenase from Shigella sonnei (strain Ss046).